A 339-amino-acid polypeptide reads, in one-letter code: Anthranilate phosphoribosyltransferase (339 aa).

5-phospho-alpha-D-ribose 1-diphosphate-binding positions include Gly-79, 82-83 (GD), Ser-87, 89-92 (NIST), 107-115 (KHGNRSISS), and Ser-119. Gly-79 lines the anthranilate pocket. Ser-91 contacts Mg(2+). Asn-110 is an anthranilate binding site. Arg-165 is a binding site for anthranilate. Positions 224 and 225 each coordinate Mg(2+).

The protein belongs to the anthranilate phosphoribosyltransferase family. As to quaternary structure, homodimer. Mg(2+) serves as cofactor.

The catalysed reaction is N-(5-phospho-beta-D-ribosyl)anthranilate + diphosphate = 5-phospho-alpha-D-ribose 1-diphosphate + anthranilate. It functions in the pathway amino-acid biosynthesis; L-tryptophan biosynthesis; L-tryptophan from chorismate: step 2/5. Its function is as follows. Catalyzes the transfer of the phosphoribosyl group of 5-phosphorylribose-1-pyrophosphate (PRPP) to anthranilate to yield N-(5'-phosphoribosyl)-anthranilate (PRA). This is Anthranilate phosphoribosyltransferase from Listeria innocua serovar 6a (strain ATCC BAA-680 / CLIP 11262).